Reading from the N-terminus, the 902-residue chain is Cytosolic 10-formyltetrahydrofolate dehydrogenase (902 aa).

Positions 1-310 (MKIAVIGQSL…PASQYFKTAD (310 aa)) are hydrolase domain. A (6R)-10-formyltetrahydrofolate-binding site is contributed by 88–90 (QFI). The active-site Proton donor is histidine 106. Aspartate 142 is a binding site for (6R)-10-formyltetrahydrofolate. Positions 318–395 (EEEQKVSEEI…EFIQMVVRRM (78 aa)) constitute a Carrier domain. Serine 354 carries the post-translational modification O-(pantetheine 4'-phosphoryl)serine. Residues 417 to 902 (TVKIPHQLFI…LKTKAVTIEY (486 aa)) form an aldehyde dehydrogenase domain region. NADP(+) is bound by residues 571-573 (IPW), 597-600 (KPAQ), 630-635 (GSLIGQ), 650-651 (GS), and 673-674 (EL). Glutamate 673 functions as the Proton acceptor in the catalytic mechanism. The Proton donor role is filled by cysteine 707. Residues lysine 757 and 804–806 (ESF) contribute to the NADP(+) site.

This sequence in the N-terminal section; belongs to the GART family. The protein in the C-terminal section; belongs to the aldehyde dehydrogenase family. ALDH1L subfamily. As to quaternary structure, homotetramer. Post-translationally, phosphopantetheinylation at Ser-354 by AASDHPPT is required for the formyltetrahydrofolate dehydrogenase activity.

It is found in the cytoplasm. The protein localises to the cytosol. It catalyses the reaction (6R)-10-formyltetrahydrofolate + NADP(+) + H2O = (6S)-5,6,7,8-tetrahydrofolate + CO2 + NADPH + H(+). Its function is as follows. Cytosolic 10-formyltetrahydrofolate dehydrogenase that catalyzes the NADP(+)-dependent conversion of 10-formyltetrahydrofolate to tetrahydrofolate and carbon dioxide. May also have an NADP(+)-dependent aldehyde dehydrogenase activity towards formaldehyde, acetaldehyde, propionaldehyde, and benzaldehyde. This is Cytosolic 10-formyltetrahydrofolate dehydrogenase (aldh1l1) from Xenopus laevis (African clawed frog).